We begin with the raw amino-acid sequence, 373 residues long: Dual-specificity RNA methyltransferase RlmN (373 aa).

E94 serves as the catalytic Proton acceptor. Positions 100 to 339 constitute a Radical SAM core domain; it reads EDDRATLCVS…VIVRKTRGDD (240 aa). Cysteines 107 and 344 form a disulfide. Residues C114, C118, and C121 each coordinate [4Fe-4S] cluster. S-adenosyl-L-methionine contacts are provided by residues 168-169, S200, 222-224, and N301; these read GE and SIH. The S-methylcysteine intermediate role is filled by C344.

This sequence belongs to the radical SAM superfamily. RlmN family. Requires [4Fe-4S] cluster as cofactor.

The protein localises to the cytoplasm. It catalyses the reaction adenosine(2503) in 23S rRNA + 2 reduced [2Fe-2S]-[ferredoxin] + 2 S-adenosyl-L-methionine = 2-methyladenosine(2503) in 23S rRNA + 5'-deoxyadenosine + L-methionine + 2 oxidized [2Fe-2S]-[ferredoxin] + S-adenosyl-L-homocysteine. It carries out the reaction adenosine(37) in tRNA + 2 reduced [2Fe-2S]-[ferredoxin] + 2 S-adenosyl-L-methionine = 2-methyladenosine(37) in tRNA + 5'-deoxyadenosine + L-methionine + 2 oxidized [2Fe-2S]-[ferredoxin] + S-adenosyl-L-homocysteine. Functionally, specifically methylates position 2 of adenine 2503 in 23S rRNA and position 2 of adenine 37 in tRNAs. m2A2503 modification seems to play a crucial role in the proofreading step occurring at the peptidyl transferase center and thus would serve to optimize ribosomal fidelity. This Shewanella sp. (strain ANA-3) protein is Dual-specificity RNA methyltransferase RlmN.